Consider the following 170-residue polypeptide: Cyclic dof factor 4 (170 aa).

Residues 25–51 form a disordered region; it reads NEEETHPPEQEATIAVRSSSSSDLTAE. The Dof-type zinc finger occupies 58–112; the sequence is IACPRCKSMETKFCYFNNYNVNQPRHFCKGCHRYWTAGGALRNVPVGAGRRKSKP. The Zn(2+) site is built by C60, C63, C85, and C88.

Expressed in the vasculature of cotyledons and hypocotyls, leaves and roots.

Its subcellular location is the nucleus. In terms of biological role, transcription factor that binds specifically to a 5'-AA[AG]G-3' consensus core sequence. Transcriptional repressor of 'CONSTANS' expression. Regulates a photoperiodic flowering response. The polypeptide is Cyclic dof factor 4 (CDF4) (Arabidopsis thaliana (Mouse-ear cress)).